Reading from the N-terminus, the 417-residue chain is Argininosuccinate synthase (417 aa).

ATP is bound at residue 8–16 (AYSGGLDTS). An L-citrulline-binding site is contributed by Tyr-87. Residue Gly-117 participates in ATP binding. L-aspartate is bound by residues Thr-119, Asn-123, and Asp-124. Asn-123 lines the L-citrulline pocket. L-citrulline-binding residues include Arg-127, Ser-175, Glu-259, and Tyr-271.

Belongs to the argininosuccinate synthase family. Type 1 subfamily. As to quaternary structure, homotetramer.

Its subcellular location is the cytoplasm. The catalysed reaction is L-citrulline + L-aspartate + ATP = 2-(N(omega)-L-arginino)succinate + AMP + diphosphate + H(+). It participates in amino-acid biosynthesis; L-arginine biosynthesis; L-arginine from L-ornithine and carbamoyl phosphate: step 2/3. The protein is Argininosuccinate synthase of Clavibacter sepedonicus (Clavibacter michiganensis subsp. sepedonicus).